We begin with the raw amino-acid sequence, 1141 residues long: Serine-aspartate repeat-containing protein E (1141 aa).

The N-terminal stretch at 1-52 is a signal peptide; that stretch reads MINRDNKKAITKKGMISNRLNKFSIRKYTVGTASILVGTTLIFGLGNQEAKA. Positions 23-34 match the YSIRK-G/S signaling motif motif; it reads FSIRKYTVGTAS. The ligand binding A region stretch occupies residues 53–601; that stretch reads AENTSTENAK…GDGTVKPEEK (549 aa). The disordered stretch occupies residues 54 to 248; the sequence is ENTSTENAKQ…RSTKPVATAP (195 aa). A compositionally biased stretch (basic and acidic residues) spans 61 to 75; it reads AKQDDATTSDNKEVV. The segment covering 77–90 has biased composition (low complexity); that stretch reads ETENNSTTENDSTN. Residues 92-108 show a composition bias toward basic and acidic residues; sequence IKKETNTDSQPEAKEES. Positions 109 to 126 are enriched in low complexity; the sequence is TTSSTQQQQNNVTATTET. Positions 130–145 are enriched in basic and acidic residues; it reads NIEKENVKPSTDKTAT. Residues 159 to 207 are compositionally biased toward polar residues; it reads NYTNNDVTTKPSTSEIQTKPTTPQESTNIENSQPQPTPSKVDNQVTDAT. A compositionally biased stretch (basic and acidic residues) spans 216–241; that stretch reads SKEELKNNPEKLKELVRNDNNTDRST. 3 CNA-B domains span residues 602 to 714, 715 to 824, and 825 to 935; these read LYKI…YKEP, KYNL…YKTP, and KYSL…EEDT. The tract at residues 929-1117 is disordered; that stretch reads GYFEEDTSDS…GSENNGSNNA (189 aa). Acidic residues predominate over residues 930–1080; the sequence is YFEEDTSDSD…DSDSDSDSDS (151 aa). The LPXTG sorting signal signature appears at 1104–1108; it reads LPETG. At Thr-1107 the chain carries Pentaglycyl murein peptidoglycan amidated threonine. Residues 1108–1141 constitute a propeptide, removed by sortase; the sequence is GSENNGSNNATLFGGLFAALGSLLLFGRRKKQNK.

This sequence belongs to the serine-aspartate repeat-containing protein (SDr) family. As to quaternary structure, interacts with host complement factor H/CFAH (via C-terminus). Interacts with host complement regulator C4BPA.

The protein resides in the secreted. Its subcellular location is the cell wall. Its function is as follows. Cell surface-associated calcium-binding protein which plays an important role in adhesion and pathogenesis. Contributes to the resistance to killing by innate immune components in blood and thus attenuates bacterial clearance by interacting with host complement factor H/CFAH and modulating its activity. Inhibits also bacterial opsonization and killing by interacting with host complement regulator C4BPA and thus inhibiting classical complement pathway activation. The chain is Serine-aspartate repeat-containing protein E (sdrE) from Staphylococcus aureus (strain Mu50 / ATCC 700699).